The following is a 489-amino-acid chain: Valine--tRNA ligase (489 aa).

The 'KMSKS' region signature appears at 482 to 486 (KMSKS). K485 is an ATP binding site.

The protein belongs to the class-I aminoacyl-tRNA synthetase family.

The catalysed reaction is tRNA(Val) + L-valine + ATP = L-valyl-tRNA(Val) + AMP + diphosphate. This Trichomonas vaginalis protein is Valine--tRNA ligase (VALS).